The primary structure comprises 598 residues: 4-coumarate--CoA ligase-like 6 (598 aa).

Residues serine 232, serine 233, glycine 234, threonine 235, threonine 236, and lysine 240 each contribute to the ATP site. Arginine 318 is a binding site for CoA. The interval 320 to 389 (DLAAAARAVE…TVFPSVQIVQ (70 aa)) is SBD1. 3 residues coordinate (E)-4-coumaroyl-AMP: glycine 367, glutamine 389, and threonine 394. The ATP site is built by glutamine 389, threonine 394, aspartate 475, and arginine 490. Positions 390–454 (SYGLTESTGP…IRGPVVMKGY (65 aa)) are SBD2. (E)-4-coumaroyl-AMP contacts are provided by lysine 492 and lysine 496. Positions 498 and 499 each coordinate CoA. Lysine 581 serves as a coordination point for ATP.

Belongs to the ATP-dependent AMP-binding enzyme family. It depends on Mg(2+) as a cofactor.

The catalysed reaction is (E)-4-coumarate + ATP + CoA = (E)-4-coumaroyl-CoA + AMP + diphosphate. It carries out the reaction (E)-4-coumarate + ATP + H(+) = (E)-4-coumaroyl-AMP + diphosphate. It catalyses the reaction (E)-4-coumaroyl-AMP + CoA = (E)-4-coumaroyl-CoA + AMP + H(+). Functionally, carboxylate--CoA ligase that may use 4-coumarate as substrate. Follows a two-step reaction mechanism, wherein the carboxylate substrate first undergoes adenylation by ATP, followed by a thioesterification in the presence of CoA to yield the final CoA thioester. The protein is 4-coumarate--CoA ligase-like 6 (4CLL6) of Oryza sativa subsp. japonica (Rice).